We begin with the raw amino-acid sequence, 1206 residues long: Phosphoglucan, water dikinase, chloroplastic (1206 aa).

Disordered stretches follow at residues 1–20 and 52–71; these read MTSLRPLETSLSIGGRPRRG and RSAASAAERTKEKKRRDSSK. A chloroplast-targeting transit peptide spans 1–56; sequence MTSLRPLETSLSIGGRPRRGLVLPPPGVGAGVLLRRGAMALPGRRGFACRGRSAAS. Positions 67–168 constitute a CBM20 domain; it reads RDSSKQPLVH…KFDIVCHWNR (102 aa). The active-site Tele-phosphohistidine intermediate is His-776.

Belongs to the PEP-utilizing enzyme family. As to quaternary structure, homodimer. It depends on Mg(2+) as a cofactor.

Its subcellular location is the plastid. The protein localises to the chloroplast. It catalyses the reaction [(1-&gt;4)-6-phospho-alpha-D-glucosyl](n) + n ATP + n H2O = [(1-&gt;4)-3,6-bisphospho-alpha-D-glucosyl](n) + n AMP + n phosphate + 2n H(+). Its function is as follows. Mediates the incorporation of phosphate into starch-like phospho-alpha-glucan, mostly at the C-3 position of glucose units. May be required for starch degradation, suggesting that the phosphate content of starch regulates its degradability. This chain is Phosphoglucan, water dikinase, chloroplastic (GWD3), found in Oryza sativa subsp. japonica (Rice).